Here is a 257-residue protein sequence, read N- to C-terminus: S-methyl-5'-thioadenosine phosphorylase (257 aa).

Residues S10 and 50-51 contribute to the phosphate site; that span reads RH. A disulfide bridge connects residues C130 and C195. M180 serves as a coordination point for substrate. T181 contacts phosphate. 204–206 contacts substrate; the sequence is DYD. Cysteines 246 and 248 form a disulfide.

Belongs to the PNP/MTAP phosphorylase family. MTAP subfamily. Homohexamer. Dimer of a homotrimer.

It catalyses the reaction S-methyl-5'-thioadenosine + phosphate = 5-(methylsulfanyl)-alpha-D-ribose 1-phosphate + adenine. It functions in the pathway amino-acid biosynthesis; L-methionine biosynthesis via salvage pathway; S-methyl-5-thio-alpha-D-ribose 1-phosphate from S-methyl-5'-thioadenosine (phosphorylase route): step 1/1. Functionally, catalyzes the reversible phosphorylation of S-methyl-5'-thioadenosine (MTA) to adenine and 5-methylthioribose-1-phosphate. Involved in the breakdown of MTA, a major by-product of polyamine biosynthesis. Responsible for the first step in the methionine salvage pathway after MTA has been generated from S-adenosylmethionine. Has broad substrate specificity with 6-aminopurine nucleosides as preferred substrates. This chain is S-methyl-5'-thioadenosine phosphorylase, found in Pyrococcus furiosus (strain ATCC 43587 / DSM 3638 / JCM 8422 / Vc1).